The primary structure comprises 157 residues: Mannose-specific lectin (157 aa).

Positions 1 to 19 (MAKASLLILAAIFLGVITP) form a signal peptide, or 23; in 70% of the molecules. Residues 24-132 (DNILYSGETL…DRWATGTHTG (109 aa)) form the Bulb-type lectin domain. The alpha-D-mannopyranose site is built by Q49, D51, N53, Y57, D60, K61, W64, A65, N67, Q80, D82, N84, Y88, I95, W96, N99, N106, Q112, D114, N116, Y120, and W125. C52 and C75 are oxidised to a cystine. A propeptide spans 129–157 (THTGLVGIPASPPSEKYPTAGKIKLVTAK) (removed in mature form).

In terms of assembly, homotetramer.

The protein localises to the secreted. Its function is as follows. Mannose-specific lectin which binds alpha-D-linked mannose. Displays a high affinity for alpha-(1-3)-mannose oligomers. Displays antiviral activity and therefore may contribute to defense against infections. This chain is Mannose-specific lectin, found in Galanthus nivalis (Common snowdrop).